Reading from the N-terminus, the 175-residue chain is MNCPYCSHPDTKVIDSRDVDDGVRRRRECVVCGQRFTTYERFQPAGLFVVKKDQRREEFNKEKLLSGLRRACEKRPLPAGAVDKIAGDIEAELYNMGKAEIPSTLLGDMVMEKLKALDNIAYVRFASVYREFTDITQLKKVVDNLVSGQDEGIHKGQLSLLPEDRVSPKTRYQRR.

The segment at 3 to 32 (CPYCSHPDTKVIDSRDVDDGVRRRRECVVC) is a zinc-finger region. One can recognise an ATP-cone domain in the interval 47–137 (LFVVKKDQRR…VYREFTDITQ (91 aa)).

It belongs to the NrdR family. Zn(2+) serves as cofactor.

Functionally, negatively regulates transcription of bacterial ribonucleotide reductase nrd genes and operons by binding to NrdR-boxes. This is Transcriptional repressor NrdR from Dehalococcoides mccartyi (strain ATCC BAA-2266 / KCTC 15142 / 195) (Dehalococcoides ethenogenes (strain 195)).